A 295-amino-acid chain; its full sequence is Deleted in azoospermia-like (295 aa).

The span at 1–10 (MSAANPETPN) shows a compositional bias: polar residues. Residues 1 to 25 (MSAANPETPNSTISREASTQSSSAA) form a disordered region. The segment covering 11–25 (STISREASTQSSSAA) has biased composition (low complexity). An RRM domain is found at 40–115 (NTVFVGGIDV…KKLKLGPAIR (76 aa)). Residues 80–132 (KGYGFVSFFNDVDVQKIVESQINFHGKKLKLGPAIRKQNLCAYHVQPRPLVFN) are homodimerization. The region spanning 167–190 (AYPTYPNSPVQVITGYQLPVYNYQ) is the DAZ domain. Phosphotyrosine is present on Tyr276.

Belongs to the RRM DAZ family. In terms of assembly, homodimer and heterodimer. Forms a heterodimer with DAZ. Interacts with BOLL, DAZAP1 and DAZAP2. Interacts with PUM2 Multiple DAZL RRMs can bind to a single RNA containing multiple GUU triplets. In terms of tissue distribution, testis specific.

Its subcellular location is the cytoplasm. It is found in the nucleus. Functionally, RNA-binding protein, which is essential for gametogenesis in both males and females. Plays a central role during spermatogenesis. Acts by binding to the 3'-UTR of mRNA, specifically recognizing GUU triplets, and thereby regulating the translation of key transcripts. This is Deleted in azoospermia-like (DAZL) from Macaca fascicularis (Crab-eating macaque).